The following is a 185-amino-acid chain: MINDIKKDAEARMKKTVEALGINFNKIRTGRAHPSILDGVSVSYYGSDTPLSQVANISVLDARTLSLSPWEKSMVPEIEKAIMKSDLGLNPVTTGELIRVPMPALTEESRKGYIKQAKTEAEQARVSIRNVRRDVLADVKELLKEKEISEDDDRRAQDDIQKITDKYVAEVDAALAVKEKDLMEI.

Belongs to the RRF family.

The protein resides in the cytoplasm. In terms of biological role, responsible for the release of ribosomes from messenger RNA at the termination of protein biosynthesis. May increase the efficiency of translation by recycling ribosomes from one round of translation to another. The sequence is that of Ribosome-recycling factor from Teredinibacter turnerae (strain ATCC 39867 / T7901).